Here is a 548-residue protein sequence, read N- to C-terminus: Membrane protein insertase YidC (548 aa).

5 helical membrane passes run 6 to 26, 357 to 377, 424 to 444, 455 to 475, and 503 to 523; these read NLIL…WESD, NWGV…FPLT, LGGC…YWAL, FALW…PILM, and PIIF…YWLV.

This sequence belongs to the OXA1/ALB3/YidC family. Type 1 subfamily. As to quaternary structure, interacts with the Sec translocase complex via SecD. Specifically interacts with transmembrane segments of nascent integral membrane proteins during membrane integration.

It localises to the cell inner membrane. Functionally, required for the insertion and/or proper folding and/or complex formation of integral membrane proteins into the membrane. Involved in integration of membrane proteins that insert both dependently and independently of the Sec translocase complex, as well as at least some lipoproteins. Aids folding of multispanning membrane proteins. In Aeromonas hydrophila subsp. hydrophila (strain ATCC 7966 / DSM 30187 / BCRC 13018 / CCUG 14551 / JCM 1027 / KCTC 2358 / NCIMB 9240 / NCTC 8049), this protein is Membrane protein insertase YidC.